The chain runs to 302 residues: Polyadenylate-binding protein 2 (302 aa).

A compositionally biased stretch (low complexity) spans 1–12 (MAAAAAAAAAAG). A disordered region spans residues 1–111 (MAAAAAAAAA…EADPGDGAIE (111 aa)). Alanine 2 carries the N-acetylalanine modification. The tract at residues 2-141 (AAAAAAAAAA…LKELQNEVEK (140 aa)) is interaction with SKIP. The residue at position 17 (arginine 17) is an Omega-N-methylarginine. Serine 19 is modified (phosphoserine). Over residues 30–47 (GAGGEAGEGDPGGAGDYG) the composition is skewed to gly residues. The segment covering 51-68 (ESEELEPGELLPEPEPEE) has biased composition (acidic residues). A Phosphoserine modification is found at serine 52. Residues 73–83 (PRAPPGAPGPG) are compositionally biased toward pro residues. A Phosphoserine modification is found at serine 91. Residues 111–147 (EDPELEAIKARVREMEEEAEKLKELQNEVEKQMNMSP) adopt a coiled-coil conformation. A stimulates PAPOLA region spans residues 115–143 (LEAIKARVREMEEEAEKLKELQNEVEKQM). Phosphoserine occurs at positions 146 and 231. The RRM domain maps to 168–245 (RSIYVGNVDY…RQIKVIPKRT (78 aa)). An asymmetric dimethylarginine; alternate mark is found at arginine 234, arginine 255, and arginine 259. 3 positions are modified to omega-N-methylarginine; alternate: arginine 234, arginine 255, and arginine 259. Residues 255–302 (RGFPRSRYRARTTNYNSSRSRFYSGFNSRPRGRIYRGRARATSWYSPY) form a strong poly(A) affinity and self-association region. 11 positions are modified to asymmetric dimethylarginine: arginine 261, arginine 263, arginine 265, arginine 273, arginine 275, arginine 283, arginine 285, arginine 287, arginine 290, arginine 292, and arginine 294. The interaction with PAPOLA stretch occupies residues 282–302 (SRPRGRIYRGRARATSWYSPY).

As to quaternary structure, monomer and homooligomer. Identified in a IGF2BP1-dependent mRNP granule complex containing untranslated mRNAs. Binds RNA as a monomer and oligomerizes when bound to poly(A). Interacts with PAPOLA, but only in presence of oligo(A) RNA. Interacts with NUDT21/CPSF5 and transportin. Associates in a ternary complex with CPSF4 and NS/NS1 and interaction with NS/NS1, blocks nuclear export of host cell mRNAs. Associates in a single complex with SKIP and MYOD1 and interacts with SKIP in differentiated myocytes. May interact with SETX. Interacts (via RRM domain and C-terminal arginine-rich region) with ZFP36 (via hypophosphorylated form); this interaction occurs in the nucleus in a RNA-independent manner, decreases in presence of single-stranded poly(A) RNA-oligomer and in a p38-dependent-manner and may down-regulated RNA poly(A) polymerase activity. Component of the poly(A) tail exosome targeting (PAXT) complex composed of PABPN1, ZFC3H1 and MTREX. Interacts with ZFC3H1 in a RNase-insensitive manner. Interacts with FRG1. Interacts with ZC3H11A. Arginine dimethylation is asymmetric and involves PRMT1 and PRMT3. It does not influence the RNA binding properties. In terms of tissue distribution, ubiquitous.

The protein localises to the cytoplasm. The protein resides in the nucleus. It localises to the nucleus speckle. Involved in the 3'-end formation of mRNA precursors (pre-mRNA) by the addition of a poly(A) tail of 200-250 nt to the upstream cleavage product. Stimulates poly(A) polymerase (PAPOLA) conferring processivity on the poly(A) tail elongation reaction and also controls the poly(A) tail length. Increases the affinity of poly(A) polymerase for RNA. Is also present at various stages of mRNA metabolism including nucleocytoplasmic trafficking and nonsense-mediated decay (NMD) of mRNA. Cooperates with SKIP to synergistically activate E-box-mediated transcription through MYOD1 and may regulate the expression of muscle-specific genes. Binds to poly(A) and to poly(G) with high affinity. May protect the poly(A) tail from degradation. Subunit of the trimeric poly(A) tail exosome targeting (PAXT) complex, a complex that directs a subset of long and polyadenylated poly(A) RNAs for exosomal degradation. The RNA exosome is fundamental for the degradation of RNA in eukaryotic nuclei. Substrate targeting is facilitated by its cofactor MTREX, which links to RNA-binding protein adapters. The polypeptide is Polyadenylate-binding protein 2 (Pabpn1) (Mus musculus (Mouse)).